Consider the following 351-residue polypeptide: MNSSLRDIANLVQGMVIGNDAITVSTLSPIDNILPGSLVFAEGEDNIKLAENSEAAAILIGQGTIDSPKPLIQVKNPFKAFIALLNHFYPPRRISPGVHPTAVIGAEVQLGDEVYVGPFVVIESGSIIGNHSVLKSHIHIGHNVVIGDHTTIHPQVTIYDNCRIGSNVTIHASTVIGSDGFGYTFVDGQHLKVPHSGYVVIENNVEIGANTAIDKATLGATVIGEGTKIDNLVQIAHSVKLGKHNIICAFTGIAGSTTTGNNVIFAANVGVSDHVHIEDEVILGARTGVPPHKHLKKGTVYLGNPAKPKDVAIKHELSVNRIPLIRKNIKSLTEQVAVINKKLDIKAKEVE.

The active-site Proton acceptor is the histidine 237.

This sequence belongs to the transferase hexapeptide repeat family. LpxD subfamily. As to quaternary structure, homotrimer.

The catalysed reaction is a UDP-3-O-[(3R)-3-hydroxyacyl]-alpha-D-glucosamine + a (3R)-hydroxyacyl-[ACP] = a UDP-2-N,3-O-bis[(3R)-3-hydroxyacyl]-alpha-D-glucosamine + holo-[ACP] + H(+). Its pathway is bacterial outer membrane biogenesis; LPS lipid A biosynthesis. Functionally, catalyzes the N-acylation of UDP-3-O-acylglucosamine using 3-hydroxyacyl-ACP as the acyl donor. Is involved in the biosynthesis of lipid A, a phosphorylated glycolipid that anchors the lipopolysaccharide to the outer membrane of the cell. In Legionella pneumophila (strain Paris), this protein is UDP-3-O-acylglucosamine N-acyltransferase 1.